Consider the following 382-residue polypeptide: Dual-specificity RNA methyltransferase RlmN (382 aa).

Glutamate 91 acts as the Proton acceptor in catalysis. The region spanning 97–339 (EEDRGTLCIS…TTIRKTRGDD (243 aa)) is the Radical SAM core domain. A disulfide bond links cysteine 104 and cysteine 344. Residues cysteine 111, cysteine 115, and cysteine 118 each coordinate [4Fe-4S] cluster. Residues 165–166 (GE), serine 197, 219–221 (SLH), and asparagine 301 each bind S-adenosyl-L-methionine. The S-methylcysteine intermediate role is filled by cysteine 344.

The protein belongs to the radical SAM superfamily. RlmN family. [4Fe-4S] cluster serves as cofactor.

The protein localises to the cytoplasm. The enzyme catalyses adenosine(2503) in 23S rRNA + 2 reduced [2Fe-2S]-[ferredoxin] + 2 S-adenosyl-L-methionine = 2-methyladenosine(2503) in 23S rRNA + 5'-deoxyadenosine + L-methionine + 2 oxidized [2Fe-2S]-[ferredoxin] + S-adenosyl-L-homocysteine. The catalysed reaction is adenosine(37) in tRNA + 2 reduced [2Fe-2S]-[ferredoxin] + 2 S-adenosyl-L-methionine = 2-methyladenosine(37) in tRNA + 5'-deoxyadenosine + L-methionine + 2 oxidized [2Fe-2S]-[ferredoxin] + S-adenosyl-L-homocysteine. Its function is as follows. Specifically methylates position 2 of adenine 2503 in 23S rRNA and position 2 of adenine 37 in tRNAs. m2A2503 modification seems to play a crucial role in the proofreading step occurring at the peptidyl transferase center and thus would serve to optimize ribosomal fidelity. The polypeptide is Dual-specificity RNA methyltransferase RlmN (Albidiferax ferrireducens (strain ATCC BAA-621 / DSM 15236 / T118) (Rhodoferax ferrireducens)).